The sequence spans 450 residues: 23S rRNA (uracil(1939)-C(5))-methyltransferase RlmD (450 aa).

[4Fe-4S] cluster contacts are provided by cysteine 81, cysteine 87, cysteine 90, and cysteine 173. S-adenosyl-L-methionine contacts are provided by glutamine 276, phenylalanine 305, asparagine 310, glutamate 326, aspartate 353, and aspartate 372. Cysteine 402 serves as the catalytic Nucleophile.

It belongs to the class I-like SAM-binding methyltransferase superfamily. RNA M5U methyltransferase family. RlmD subfamily.

The catalysed reaction is uridine(1939) in 23S rRNA + S-adenosyl-L-methionine = 5-methyluridine(1939) in 23S rRNA + S-adenosyl-L-homocysteine + H(+). Functionally, catalyzes the formation of 5-methyl-uridine at position 1939 (m5U1939) in 23S rRNA. The chain is 23S rRNA (uracil(1939)-C(5))-methyltransferase RlmD from Idiomarina loihiensis (strain ATCC BAA-735 / DSM 15497 / L2-TR).